The primary structure comprises 375 residues: Myb family transcription factor PHL5 (375 aa).

The span at 159-171 (TSSQHQPKQSHPR) shows a compositional bias: polar residues. A disordered region spans residues 159 to 178 (TSSQHQPKQSHPRFSSPPSF). The HTH myb-type domain occupies 189-249 (CVNKTRIRWT…HLQKYRIAKY (61 aa)). A DNA-binding region (H-T-H motif) is located at residues 220-245 (PKAILKRMDSDGLTIFHVKSHLQKYR). Positions 279-299 (KEALQLQLDVQRHLHEQLEIQ) form a coiled coil. An LHEQLE motif is present at residues 292–297 (LHEQLE).

It belongs to the MYB-CC family.

The protein resides in the nucleus. The sequence is that of Myb family transcription factor PHL5 from Arabidopsis thaliana (Mouse-ear cress).